Reading from the N-terminus, the 627-residue chain is MESVHSRDPVKEEKKHVFMGMEHELNPETHNDSNSDSYGLPQLSEKYNALRQNRSLIIQQTEIIGSAYNKWYLQAILLLSAFICGYGYGLDGNIRYIYTGYATSSYSEHSLLSTINVINAVVSAASQIIYARLSDVFGRLYLFISAVILYVVGTIIQSQAYDVQRYAAGAIFYNAGYVGVILILLIILSDFSSLKWRLLYQFVPTWPFIINTWIAGNITSRANPVVNWSWDVGMWAFIFPLSCVPIVLCMLHMQWRARKTPEWHALKGQKSYYQEHGFIKILKQLFWMLDVVGVLLMGCSLGCILVPLTLAGGVKTTWNDSRLIGPFVLGFVLIPILWIWEYRFARDPILPYRLVKDRAVWSSMGISFLIDFIYYMAADYLYTVMIVAVNESVKSATRIATLSSFVSTVASPFFALLVTRCTRLKPFIMFGCALWMVAMGLLYHFRGGSQSHSGIIGALCVWGVGTTLFTYPVTVSVQSAVSHENMATVTALNYTLYRIGSAVGSAVSGAIWTQTLYKQILKRMGDVALATTAYESPYTFIETYTWGTPQRNALMNAYKYVQRLETIVALVFCVPLIAFSLCLRDPKLTDTVAVEYIEDGEYVDTKDNDPILDWFEKLPSKFTFKRE.

The Extracellular portion of the chain corresponds to 1 to 70 (MESVHSRDPV…TEIIGSAYNK (70 aa)). The chain crosses the membrane as a helical span at residues 71–91 (WYLQAILLLSAFICGYGYGLD). The Cytoplasmic portion of the chain corresponds to 92 to 110 (GNIRYIYTGYATSSYSEHS). Residues 111–131 (LLSTINVINAVVSAASQIIYA) form a helical membrane-spanning segment. Residues 132-135 (RLSD) are Extracellular-facing. The chain crosses the membrane as a helical span at residues 136-156 (VFGRLYLFISAVILYVVGTII). Residues 157 to 167 (QSQAYDVQRYA) are Cytoplasmic-facing. The helical transmembrane segment at 168-188 (AGAIFYNAGYVGVILILLIIL) threads the bilayer. At 189–197 (SDFSSLKWR) the chain is on the extracellular side. The chain crosses the membrane as a helical span at residues 198–218 (LLYQFVPTWPFIINTWIAGNI). The Cytoplasmic portion of the chain corresponds to 219–231 (TSRANPVVNWSWD). A helical membrane pass occupies residues 232 to 252 (VGMWAFIFPLSCVPIVLCMLH). The Extracellular segment spans residues 253–290 (MQWRARKTPEWHALKGQKSYYQEHGFIKILKQLFWMLD). Residues 291 to 311 (VVGVLLMGCSLGCILVPLTLA) traverse the membrane as a helical segment. At 312 to 323 (GGVKTTWNDSRL) the chain is on the cytoplasmic side. The helical transmembrane segment at 324–344 (IGPFVLGFVLIPILWIWEYRF) threads the bilayer. Residues 345-367 (ARDPILPYRLVKDRAVWSSMGIS) are Extracellular-facing. The helical transmembrane segment at 368–388 (FLIDFIYYMAADYLYTVMIVA) threads the bilayer. Residues 389–398 (VNESVKSATR) are Cytoplasmic-facing. Residues 399–419 (IATLSSFVSTVASPFFALLVT) traverse the membrane as a helical segment. Residues 420–424 (RCTRL) lie on the Extracellular side of the membrane. The helical transmembrane segment at 425–445 (KPFIMFGCALWMVAMGLLYHF) threads the bilayer. Over 446-454 (RGGSQSHSG) the chain is Cytoplasmic. The chain crosses the membrane as a helical span at residues 455–475 (IIGALCVWGVGTTLFTYPVTV). Residues 476–563 (SVQSAVSHEN…LMNAYKYVQR (88 aa)) are Extracellular-facing. Residues 564–584 (LETIVALVFCVPLIAFSLCLR) traverse the membrane as a helical segment. The Cytoplasmic portion of the chain corresponds to 585–627 (DPKLTDTVAVEYIEDGEYVDTKDNDPILDWFEKLPSKFTFKRE).

The protein belongs to the major facilitator superfamily.

The protein localises to the cell membrane. Its subcellular location is the endosome membrane. Its function is as follows. Involved in the transport of siderophore ferrichrome and so has a role in iron homeostasis. This chain is Siderophore iron transporter ARN1 (ARN1), found in Saccharomyces cerevisiae (strain ATCC 204508 / S288c) (Baker's yeast).